The primary structure comprises 477 residues: Monocarboxylate transporter 12-B (477 aa).

Residues 1-9 lie on the Cytoplasmic side of the membrane; that stretch reads MAQEKKKGG. 12 helical membrane-spanning segments follow: residues 10–30, 58–78, 86–106, 116–136, 148–168, 178–198, 253–273, 289–309, 320–340, 344–364, 383–403, and 413–433; these read VLPPDGGWGWMIVAGCFVVTV, AWIHSLVDCTTMLCAPLGSLI, IAVILGGFLASVGLVLSSFAT, GLLTGLGFALCYTPAIAMVGI, IAMSGSGIGTFILAPVVQLLI, LILGGFVLNLCVCGALLRPII, FLVLAGSFLLLASGCSLPFVY, AFLMSILGVIDIVGNITFGWL, NICYMFAVGMEGLCCLFIPLL, VWLVPFSVLYGYFDGAYVALI, VVYFLHAVPYLVSPPIGGWLV, and FFLSGFALISSSLLLFSVAII. Residues 434–477 lie on the Cytoplasmic side of the membrane; that stretch reads RYCQRNQKKNSLSKIPKLVSCEGKQVDYYPPKNKDLMLIIPATS.

The protein belongs to the major facilitator superfamily. Monocarboxylate porter (TC 2.A.1.13) family.

It localises to the cell membrane. Its subcellular location is the basolateral cell membrane. The catalysed reaction is creatine(in) = creatine(out). It catalyses the reaction guanidinoacetate(in) = guanidinoacetate(out). In terms of biological role, functions as a transporter for creatine and as well for its precursor guanidinoacetate. Transport of creatine and GAA is independent of resting membrane potential and extracellular Na(+), Cl(-), or pH. Contributes to the process of creatine biosynthesis and distribution. This chain is Monocarboxylate transporter 12-B (slc16a12b), found in Danio rerio (Zebrafish).